Reading from the N-terminus, the 343-residue chain is MLVLGVESTAHTFSLGLVLDGKILGQLGKTYLPPSGEGIHPREAADHHSKVAPVIFRQLLNAHGITASDIDVIAYAAGPGLGPALRIGAVFARALAIKLGVPLVPVHHGIAHIEVARYTTASCDPLVLLISGGHTLIAGFSEGRYRIFGETLDVAIGNAIDMFAREVGLGFPGVPAVEKCAESADRLVPFPMTIIGQDLSYAGLTTYALKLWKSGTPLPVVCKSLVEAAYYMLAEVTERALAFTKKRELVVAGGVARSKRLRGILEHVGREYGVAVKIVPDEYAGDNGAMIALTGYYAYRRGIRTTPEESFVKQRWRLDSVDIPWFYDLCEEVVLNTSTKRRP.

Fe cation-binding residues include histidine 108 and histidine 112. Residues 129–133 (LISGG), aspartate 161, glutamate 178, and serine 258 each bind substrate. Aspartate 286 contributes to the Fe cation binding site.

Belongs to the KAE1 / TsaD family. Fe(2+) serves as cofactor.

Its subcellular location is the cytoplasm. It carries out the reaction L-threonylcarbamoyladenylate + adenosine(37) in tRNA = N(6)-L-threonylcarbamoyladenosine(37) in tRNA + AMP + H(+). Functionally, required for the formation of a threonylcarbamoyl group on adenosine at position 37 (t(6)A37) in tRNAs that read codons beginning with adenine. Is probably involved in the transfer of the threonylcarbamoyl moiety of threonylcarbamoyl-AMP (TC-AMP) to the N6 group of A37. The protein is tRNA N6-adenosine threonylcarbamoyltransferase of Pyrobaculum aerophilum (strain ATCC 51768 / DSM 7523 / JCM 9630 / CIP 104966 / NBRC 100827 / IM2).